Reading from the N-terminus, the 429-residue chain is MVDVEEKSQEVEYVDPTVNRVPNYEVSEKAFLLTQSKVSIEQRKEAAEFVLAKIKEEEMAPYYKYLCEEYLVNNGQSDLEHDEKSDSLNEWIKFDQELYNELCKKNESKIKELNEKIQKLEEDDEGELEQAQAWINLGEYYAQIGDKDNAEKTLGKSLSKAISTGAKIDVMLTIARLGFFYNDQLYVKEKLEAVNSMIEKGGDWERRNRYKTYYGIHCLAVRNFKEAAKLLVDSLATFTSIELTSYESIATYASVTGLFTLERTDLKSKVIDSPELLSLISTTAALQSISSLTISLYASDYASYFPYLLETYANVLIPCKYLNRHADFFVREMRRKVYAQLLESYKTLSLKSMASAFGVSVAFLDNDLGKFIPNKQLNCVIDRVNGIVETNRPDNKNAQYHLLVKQGDGLLTKLQKYGAAVRLTGSDRV.

Serine 8 and serine 77 each carry phosphoserine. A TPR repeat occupies 131–164 (AQAWINLGEYYAQIGDKDNAEKTLGKSLSKAIST). Positions 223–395 (NFKEAAKLLV…GIVETNRPDN (173 aa)) constitute a PCI domain.

In terms of assembly, the 26S proteasome is composed of a core protease, known as the 20S proteasome, capped at one or both ends by the 19S regulatory complex (RC). The RC is composed of at least 18 different subunits in two subcomplexes, the base and the lid, which form the portions proximal and distal to the 20S proteolytic core, respectively. Component of the lid subcomplex of the 19S RC.

It localises to the nucleus. In terms of biological role, component of the 19S cap proteasome complex which acts as a regulatory subunit of the 26S proteasome, involved in the ATP-dependent degradation of ubiquitinated proteins. The polypeptide is 26S proteasome regulatory subunit RPN7 (Saccharomyces cerevisiae (strain ATCC 204508 / S288c) (Baker's yeast)).